We begin with the raw amino-acid sequence, 204 residues long: Pectinesterase inhibitor 9 (204 aa).

The N-terminal stretch at 1–23 (MELKNTIFLVILLSITILQSSSA) is a signal peptide. Asparagine 26 carries an N-linked (GlcNAc...) asparagine glycan. 2 cysteine pairs are disulfide-bonded: cysteine 38-cysteine 47 and cysteine 106-cysteine 157.

Belongs to the PMEI family. Binds reversibly to PME3 to inhibit its activity; the stability of the PME3-PMEI9 complex and the inhibition of the pectin methylesterase (PME) activity is pH-dependent, based on protonation status of amino-acids at the complex interface. As to expression, highly expressed in roots and etiolated hypocotyls. Expressed in seedlings, leaves, stems, siliques, floral buds and mature seeds.

The protein resides in the secreted. Its subcellular location is the extracellular space. It is found in the apoplast. Functionally, pectin methylesterase (PME) inhibitor that probably targets root-expressed PME and PME3 in a moderate pH-dependent manner, mainly in slightly acidic conditions (pH 6.3 and 5.0) and to some extent at pH 7.5; this processus relies on changes in the protonation of amino acids involved in intermolecular and intramolecular interactions. Regulates de-methylesterification of pectins in roots and affects root growth. This is Pectinesterase inhibitor 9 from Arabidopsis thaliana (Mouse-ear cress).